The primary structure comprises 351 residues: AT-hook motif nuclear-localized protein 10 (351 aa).

A disordered region spans residues 1 to 151 (MSGSETGLMA…RPPGSSSKRL (151 aa)). Residues 23 to 37 (HQQQQHSQAQPQQSQ) show a composition bias toward low complexity. Polar residues predominate over residues 60 to 77 (SPPQQYQPNSAGENSVLN). A Bipartite nuclear localization signal motif is present at residues 97 to 105 (KKRRGRPRK). 2 consecutive DNA-binding regions (a.T hook) follow at residues 97-109 (KKRR…YGPD) and 138-149 (KKRGRPPGSSSK). The region spanning 159–301 (TGIGFTPHVL…QMGLSSPVLP (143 aa)) is the PPC domain. Polar residues-rich tracts occupy residues 310–325 (MTPS…SESS) and 334–351 (IHQS…MPWK). Positions 310–351 (MTPSSPQSRGTMSESSCGGGHGSPIHQSTGGPYNNTINMPWK) are disordered.

It localises to the nucleus. Functionally, transcription factor that specifically binds AT-rich DNA sequences related to the nuclear matrix attachment regions (MARs). The chain is AT-hook motif nuclear-localized protein 10 from Arabidopsis thaliana (Mouse-ear cress).